Consider the following 155-residue polypeptide: Endoribonuclease YbeY (155 aa).

3 residues coordinate Zn(2+): His-114, His-118, and His-124.

This sequence belongs to the endoribonuclease YbeY family. Requires Zn(2+) as cofactor.

It is found in the cytoplasm. Single strand-specific metallo-endoribonuclease involved in late-stage 70S ribosome quality control and in maturation of the 3' terminus of the 16S rRNA. The chain is Endoribonuclease YbeY from Escherichia coli O7:K1 (strain IAI39 / ExPEC).